The sequence spans 344 residues: Protein-arginine kinase (344 aa).

In terms of domain architecture, Phosphagen kinase C-terminal spans isoleucine 14 to alanine 244. Residues serine 17–arginine 21, histidine 81, arginine 115, arginine 166–methionine 170, and arginine 197–glutamate 202 each bind ATP.

Belongs to the ATP:guanido phosphotransferase family.

It catalyses the reaction L-arginyl-[protein] + ATP = N(omega)-phospho-L-arginyl-[protein] + ADP + H(+). Catalyzes the specific phosphorylation of arginine residues in proteins. The chain is Protein-arginine kinase from Clostridium novyi (strain NT).